Here is a 74-residue protein sequence, read N- to C-terminus: Kappa-scoloptoxin(07)-Ssm2d (74 aa).

An N-terminal signal peptide occupies residues 1–19; sequence MLVFYALLFVTVFSNTVMG. Residues 20 to 41 constitute a propeptide that is removed on maturation; sequence ATIDKPIPKPILREAIEEIEVN.

The protein belongs to the scoloptoxin-07 family. Contains 3 disulfide bonds. In terms of tissue distribution, expressed by the venom gland.

Its subcellular location is the secreted. Functionally, inhibits voltage-gated potassium channels. The chain is Kappa-scoloptoxin(07)-Ssm2d from Scolopendra mutilans (Chinese red-headed centipede).